A 152-amino-acid polypeptide reads, in one-letter code: Ribonuclease H (152 aa).

Residues 6 to 147 (KKNRVIAYTD…ADELANKAIA (142 aa)) enclose the RNase H type-1 domain. Mg(2+) is bound by residues Asp15, Glu53, Asp75, and Asp139.

It belongs to the RNase H family. In terms of assembly, monomer. Mg(2+) serves as cofactor.

It localises to the cytoplasm. It carries out the reaction Endonucleolytic cleavage to 5'-phosphomonoester.. In terms of biological role, endonuclease that specifically degrades the RNA of RNA-DNA hybrids. This Francisella tularensis subsp. tularensis (strain FSC 198) protein is Ribonuclease H.